The sequence spans 355 residues: Cyclin-D1-binding protein 1 (355 aa).

Ala-2 carries the N-acetylalanine modification. Interaction with TCF3 regions lie at residues 2–181 and 147–355; these read ASST…VDLV and ISCN…AVEL. Positions 2-187 are interaction with RPLP0; it reads ASSTTPVSFL…VDLVKDAHEE (186 aa). A required for interaction with CCND1 region spans residues 2–205; it reads ASSTTPVSFL…DPYCGLLDDS (204 aa). The segment at 203–224 is disordered; it reads DDSEDNSDSHHNEDGVGLPSNR. The tract at residues 235–355 is interaction with RPLP0; that stretch reads LITPCLALVR…KELTQRAVEL (121 aa).

Belongs to the CCNDBP1 family. Interacts with CCND1 and GRAP2. May also interact with COPS5, RPLP0, SIRT6, SYF2 and TCF3. Phosphorylated.

The protein resides in the cytoplasm. It is found in the nucleus. In terms of biological role, may negatively regulate cell cycle progression. May act at least in part via inhibition of the cyclin-D1/CDK4 complex, thereby preventing phosphorylation of RB1 and blocking E2F-dependent transcription. The protein is Cyclin-D1-binding protein 1 (Ccndbp1) of Rattus norvegicus (Rat).